We begin with the raw amino-acid sequence, 268 residues long: GTP cyclohydrolase FolE2 (268 aa).

This sequence belongs to the GTP cyclohydrolase IV family.

It catalyses the reaction GTP + H2O = 7,8-dihydroneopterin 3'-triphosphate + formate + H(+). Its pathway is cofactor biosynthesis; 7,8-dihydroneopterin triphosphate biosynthesis; 7,8-dihydroneopterin triphosphate from GTP: step 1/1. In terms of biological role, converts GTP to 7,8-dihydroneopterin triphosphate. This is GTP cyclohydrolase FolE2 from Janthinobacterium sp. (strain Marseille) (Minibacterium massiliensis).